Here is a 125-residue protein sequence, read N- to C-terminus: Neuraminyllactose-binding hemagglutinin (125 aa).

The segment at 92–97 is N-acetyl-neuraminyl-alpha(2,3)-lactose binding motif; it reads KRTIQK.

It is found in the cell outer membrane. In Helicobacter pylori (Campylobacter pylori), this protein is Neuraminyllactose-binding hemagglutinin (hpaA).